A 373-amino-acid polypeptide reads, in one-letter code: SWI/SNF-related matrix-associated actin-dependent regulator of chromatin subfamily B member 1-A (373 aa).

Residues 1-101 form a DNA-binding region; it reads MALSKTYGQK…DEKYKAVSIS (101 aa).

The protein belongs to the SNF5 family. In terms of assembly, component of the multiprotein chromatin-remodeling complexes SWI/SNF. Component of neural progenitors-specific chromatin remodeling complex (npBAF complex) and the neuron-specific chromatin remodeling complex (nBAF complex). Component of the BAF (SWI/SNF) chromatin remodeling complex. Component of the SWI/SNF-B (PBAF) chromatin remodeling complex. Binds to double-stranded DNA.

The protein resides in the nucleus. In terms of biological role, involved in chromatin-remodeling. Core component of the BAF (SWI/SNF) complex. This ATP-dependent chromatin-remodeling complex plays important roles in cell proliferation and differentiation, in cellular antiviral activities and inhibition of tumor formation. Belongs to the neural progenitors-specific chromatin remodeling complex (npBAF complex) and the neuron-specific chromatin remodeling complex (nBAF complex) and may play a role in neural development. The sequence is that of SWI/SNF-related matrix-associated actin-dependent regulator of chromatin subfamily B member 1-A (smarcb1a) from Danio rerio (Zebrafish).